A 202-amino-acid chain; its full sequence is Transcription factor MUTE (202 aa).

A bHLH domain is found at 1–49; the sequence is MSHIAVERNRRRQMNEHLKSLRSLTPCFYIKRGDQASIIGGVIEFIKEL.

As to quaternary structure, homodimer. Leaf epidermis and flowers.

It is found in the nucleus. Transcription factor. Together with FMA and SPCH, regulates the stomata formation. Required for the differentiation of stomatal guard cells, by promoting successive asymmetric cell divisions and the formation of guard mother cells. Promotes the conversion of the leaf epidermis into stomata. In Arabidopsis thaliana (Mouse-ear cress), this protein is Transcription factor MUTE (MUTE).